Reading from the N-terminus, the 1070-residue chain is DNA-directed RNA polymerase subunit beta (1070 aa).

The protein belongs to the RNA polymerase beta chain family. As to quaternary structure, in plastids the minimal PEP RNA polymerase catalytic core is composed of four subunits: alpha, beta, beta', and beta''. When a (nuclear-encoded) sigma factor is associated with the core the holoenzyme is formed, which can initiate transcription.

It is found in the plastid. The protein resides in the chloroplast. The enzyme catalyses RNA(n) + a ribonucleoside 5'-triphosphate = RNA(n+1) + diphosphate. In terms of biological role, DNA-dependent RNA polymerase catalyzes the transcription of DNA into RNA using the four ribonucleoside triphosphates as substrates. The polypeptide is DNA-directed RNA polymerase subunit beta (Dioscorea elephantipes (Elephant's foot yam)).